Here is a 678-residue protein sequence, read N- to C-terminus: Exoribonuclease 2 (678 aa).

In terms of domain architecture, RNB spans 193-521 (REDLTALPFV…INHRLLKAHI (329 aa)). The S1 motif domain maps to 568-650 (ETRFQAEIFD…ENRSLVGKPT (83 aa)). The segment at 658–678 (SETQTSTEQPAEGAENNEPQA) is disordered.

This sequence belongs to the RNR ribonuclease family. RNase II subfamily.

It localises to the cytoplasm. The enzyme catalyses Exonucleolytic cleavage in the 3'- to 5'-direction to yield nucleoside 5'-phosphates.. Functionally, involved in mRNA degradation. Hydrolyzes single-stranded polyribonucleotides processively in the 3' to 5' direction. The polypeptide is Exoribonuclease 2 (Vibrio cholerae serotype O1 (strain ATCC 39541 / Classical Ogawa 395 / O395)).